The following is a 239-amino-acid chain: Serine protease SplC (239 aa).

An N-terminal signal peptide occupies residues 1-36 (MNKNIVIKSMAALAILTSVTGINAAVVDETQQIANA). Residues H75, D113, and S193 each act as charge relay system in the active site.

This sequence belongs to the peptidase S1B family.

The protein resides in the secreted. The sequence is that of Serine protease SplC (splC) from Staphylococcus aureus (strain bovine RF122 / ET3-1).